A 119-amino-acid polypeptide reads, in one-letter code: Large ribosomal subunit protein bL20 (119 aa).

The protein belongs to the bacterial ribosomal protein bL20 family.

Functionally, binds directly to 23S ribosomal RNA and is necessary for the in vitro assembly process of the 50S ribosomal subunit. It is not involved in the protein synthesizing functions of that subunit. This Coxiella burnetii (strain CbuK_Q154) (Coxiella burnetii (strain Q154)) protein is Large ribosomal subunit protein bL20.